We begin with the raw amino-acid sequence, 98 residues long: NADH-ubiquinone oxidoreductase chain 4L (98 aa).

3 consecutive transmembrane segments (helical) span residues 2-22 (PSIF…TLVF), 29-49 (SLLC…LIIL), and 61-81 (ILLL…LVMV).

Belongs to the complex I subunit 4L family. As to quaternary structure, core subunit of respiratory chain NADH dehydrogenase (Complex I) which is composed of 45 different subunits.

It is found in the mitochondrion inner membrane. The catalysed reaction is a ubiquinone + NADH + 5 H(+)(in) = a ubiquinol + NAD(+) + 4 H(+)(out). Its function is as follows. Core subunit of the mitochondrial membrane respiratory chain NADH dehydrogenase (Complex I) which catalyzes electron transfer from NADH through the respiratory chain, using ubiquinone as an electron acceptor. Part of the enzyme membrane arm which is embedded in the lipid bilayer and involved in proton translocation. The sequence is that of NADH-ubiquinone oxidoreductase chain 4L (MT-ND4L) from Propithecus diadema diadema (Diademed sifaka).